The chain runs to 1399 residues: DNA-directed RNA polymerase subunit beta' (1399 aa).

Residues Cys71, Cys73, Cys86, and Cys89 each contribute to the Zn(2+) site. Residues Asp462, Asp464, and Asp466 each contribute to the Mg(2+) site. Zn(2+) contacts are provided by Cys810, Cys884, Cys891, and Cys894. The tract at residues 1379-1399 (KQAAIVPSQPEPQPLALPPAE) is disordered. Positions 1387–1399 (QPEPQPLALPPAE) are enriched in pro residues.

It belongs to the RNA polymerase beta' chain family. As to quaternary structure, the RNAP catalytic core consists of 2 alpha, 1 beta, 1 beta' and 1 omega subunit. When a sigma factor is associated with the core the holoenzyme is formed, which can initiate transcription. Mg(2+) serves as cofactor. Zn(2+) is required as a cofactor.

The catalysed reaction is RNA(n) + a ribonucleoside 5'-triphosphate = RNA(n+1) + diphosphate. Its function is as follows. DNA-dependent RNA polymerase catalyzes the transcription of DNA into RNA using the four ribonucleoside triphosphates as substrates. The protein is DNA-directed RNA polymerase subunit beta' of Bradyrhizobium sp. (strain BTAi1 / ATCC BAA-1182).